We begin with the raw amino-acid sequence, 277 residues long: 3-methyl-2-oxobutanoate hydroxymethyltransferase (277 aa).

Mg(2+) contacts are provided by D43 and D82. 3-methyl-2-oxobutanoate is bound by residues 43–44, D82, and K112; that span reads DS. Residue E114 participates in Mg(2+) binding. Residue E181 is the Proton acceptor of the active site.

Belongs to the PanB family. In terms of assembly, homodecamer; pentamer of dimers. It depends on Mg(2+) as a cofactor.

The protein localises to the cytoplasm. The enzyme catalyses 3-methyl-2-oxobutanoate + (6R)-5,10-methylene-5,6,7,8-tetrahydrofolate + H2O = 2-dehydropantoate + (6S)-5,6,7,8-tetrahydrofolate. It participates in cofactor biosynthesis; (R)-pantothenate biosynthesis; (R)-pantoate from 3-methyl-2-oxobutanoate: step 1/2. Its function is as follows. Catalyzes the reversible reaction in which hydroxymethyl group from 5,10-methylenetetrahydrofolate is transferred onto alpha-ketoisovalerate to form ketopantoate. The chain is 3-methyl-2-oxobutanoate hydroxymethyltransferase from Bacillus subtilis (strain 168).